Here is a 571-residue protein sequence, read N- to C-terminus: Proline--tRNA ligase (571 aa).

Belongs to the class-II aminoacyl-tRNA synthetase family. ProS type 1 subfamily. In terms of assembly, homodimer.

The protein localises to the cytoplasm. The enzyme catalyses tRNA(Pro) + L-proline + ATP = L-prolyl-tRNA(Pro) + AMP + diphosphate. In terms of biological role, catalyzes the attachment of proline to tRNA(Pro) in a two-step reaction: proline is first activated by ATP to form Pro-AMP and then transferred to the acceptor end of tRNA(Pro). As ProRS can inadvertently accommodate and process non-cognate amino acids such as alanine and cysteine, to avoid such errors it has two additional distinct editing activities against alanine. One activity is designated as 'pretransfer' editing and involves the tRNA(Pro)-independent hydrolysis of activated Ala-AMP. The other activity is designated 'posttransfer' editing and involves deacylation of mischarged Ala-tRNA(Pro). The misacylated Cys-tRNA(Pro) is not edited by ProRS. The sequence is that of Proline--tRNA ligase from Azotobacter vinelandii (strain DJ / ATCC BAA-1303).